A 124-amino-acid polypeptide reads, in one-letter code: V-type proton ATPase subunit F (124 aa).

This sequence belongs to the V-ATPase F subunit family. In terms of assembly, V-ATPase is a heteromultimeric enzyme composed of a peripheral catalytic V1 complex (components A to H) attached to an integral membrane V0 proton pore complex (components: a, c, c', c'', d, e, f and VOA1).

The protein resides in the vacuole membrane. Its function is as follows. Subunit of the V1 complex of vacuolar(H+)-ATPase (V-ATPase), a multisubunit enzyme composed of a peripheral complex (V1) that hydrolyzes ATP and a membrane integral complex (V0) that translocates protons. V-ATPase is responsible for acidifying and maintaining the pH of intracellular compartments. The chain is V-type proton ATPase subunit F (vma7) from Neosartorya fischeri (strain ATCC 1020 / DSM 3700 / CBS 544.65 / FGSC A1164 / JCM 1740 / NRRL 181 / WB 181) (Aspergillus fischerianus).